The sequence spans 189 residues: Ribosome maturation factor RimM (189 aa).

The PRC barrel domain maps to 96–169 (EDEFYYADLE…TLLIDPLAAG (74 aa)).

The protein belongs to the RimM family. Binds ribosomal protein uS19.

The protein resides in the cytoplasm. Functionally, an accessory protein needed during the final step in the assembly of 30S ribosomal subunit, possibly for assembly of the head region. Essential for efficient processing of 16S rRNA. May be needed both before and after RbfA during the maturation of 16S rRNA. It has affinity for free ribosomal 30S subunits but not for 70S ribosomes. The sequence is that of Ribosome maturation factor RimM from Rhizobium johnstonii (strain DSM 114642 / LMG 32736 / 3841) (Rhizobium leguminosarum bv. viciae).